Here is a 598-residue protein sequence, read N- to C-terminus: Aspartate--tRNA(Asp/Asn) ligase (598 aa).

Glu-182 contacts L-aspartate. Positions 206-209 (QIFK) are aspartate. Arg-228 provides a ligand contact to L-aspartate. Residues 228–230 (RDE) and Gln-237 contribute to the ATP site. An L-aspartate-binding site is contributed by His-456. Glu-490 is a binding site for ATP. Residue Arg-497 participates in L-aspartate binding. 542 to 545 (GLDR) is an ATP binding site.

It belongs to the class-II aminoacyl-tRNA synthetase family. Type 1 subfamily. Homodimer.

It localises to the cytoplasm. The catalysed reaction is tRNA(Asx) + L-aspartate + ATP = L-aspartyl-tRNA(Asx) + AMP + diphosphate. Its function is as follows. Aspartyl-tRNA synthetase with relaxed tRNA specificity since it is able to aspartylate not only its cognate tRNA(Asp) but also tRNA(Asn). Reaction proceeds in two steps: L-aspartate is first activated by ATP to form Asp-AMP and then transferred to the acceptor end of tRNA(Asp/Asn). In Lachnoclostridium phytofermentans (strain ATCC 700394 / DSM 18823 / ISDg) (Clostridium phytofermentans), this protein is Aspartate--tRNA(Asp/Asn) ligase.